A 910-amino-acid polypeptide reads, in one-letter code: Eukaryotic translation initiation factor 3 subunit C (910 aa).

Positions 1 to 21 (MSRFFANGSDSESESSEDEIQ) are disordered. The span at 11 to 20 (SESESSEDEI) shows a compositional bias: acidic residues. S34, S165, S176, and S185 each carry phosphoserine. Residues 157–281 (FREAPDQESE…KRAEDDEDGE (125 aa)) are disordered. The span at 162 to 186 (DQESEAEDEVVAQESDGGDAGDDSD) shows a compositional bias: acidic residues. Residues 193-207 (EAAPKAVKSAPAKAA) are compositionally biased toward low complexity. Over residues 209-235 (ADDDDSDDSIDWDSDSESETESSDDEN) the composition is skewed to acidic residues. Residues 240 to 268 (MRERFLKRTTEKEEKDDDKRKDKRKEQKV) show a composition bias toward basic and acidic residues. Residues 639–815 (FHMHINLELL…ETVVMHRSEP (177 aa)) form the PCI domain. A disordered region spans residues 847 to 910 (FFQRGNMGNR…QQQVQTIDEE (64 aa)). Residues 862 to 874 (NRNQNNQGGNWLG) show a composition bias toward low complexity. The span at 882–891 (RNRNQRGHHK) shows a compositional bias: basic residues. Over residues 895 to 910 (DRQQQQQQQVQTIDEE) the composition is skewed to low complexity.

It belongs to the eIF-3 subunit C family. In terms of assembly, component of the eukaryotic translation initiation factor 3 (eIF-3) complex. The eIF-3 complex interacts with pix.

It localises to the cytoplasm. Its function is as follows. Component of the eukaryotic translation initiation factor 3 (eIF-3) complex, which is involved in protein synthesis of a specialized repertoire of mRNAs and, together with other initiation factors, stimulates binding of mRNA and methionyl-tRNAi to the 40S ribosome. The eIF-3 complex specifically targets and initiates translation of a subset of mRNAs involved in cell proliferation. The chain is Eukaryotic translation initiation factor 3 subunit C from Drosophila yakuba (Fruit fly).